Consider the following 299-residue polypeptide: Ethylmalonyl-CoA decarboxylase (299 aa).

This sequence belongs to the enoyl-CoA hydratase/isomerase family.

It localises to the cytoplasm. The protein localises to the cytosol. The catalysed reaction is (2S)-ethylmalonyl-CoA + H(+) = butanoyl-CoA + CO2. It carries out the reaction (S)-methylmalonyl-CoA + H(+) = propanoyl-CoA + CO2. The enzyme catalyses (2R)-ethylmalonyl-CoA + H(+) = butanoyl-CoA + CO2. In terms of biological role, decarboxylates ethylmalonyl-CoA, a potentially toxic metabolite, to form butyryl-CoA, suggesting it might be involved in metabolite proofreading. Acts preferentially on (S)-ethylmalonyl-CoA but also has some activity on the (R)-isomer. Also has methylmalonyl-CoA decarboxylase activity at lower level. The polypeptide is Ethylmalonyl-CoA decarboxylase (echdc1) (Xenopus laevis (African clawed frog)).